We begin with the raw amino-acid sequence, 123 residues long: Cysteine proteinase inhibitor 8 (123 aa).

An N-terminal signal peptide occupies residues 1 to 19 (MARIPLLLALLLAVSAAAA). Residues 33-91 (GGWSPITDVGDPHIQELGGWAVERHASLSSDGLRFRRVTSGEQQVVSGMNYRLVVSASD) form the Cystatin domain. The short motif at 76-80 (QVVSG) is the Secondary area of contact element.

The protein belongs to the cystatin family. Phytocystatin subfamily.

It is found in the secreted. Its function is as follows. Specific inhibitor of cysteine proteinases. Probably involved in the regulation of endogenous processes and in defense against pests and pathogens. The protein is Cysteine proteinase inhibitor 8 of Oryza sativa subsp. japonica (Rice).